The sequence spans 211 residues: Protein-L-isoaspartate O-methyltransferase (211 aa).

Residue Ser-60 is part of the active site.

The protein belongs to the methyltransferase superfamily. L-isoaspartyl/D-aspartyl protein methyltransferase family.

Its subcellular location is the cytoplasm. It carries out the reaction [protein]-L-isoaspartate + S-adenosyl-L-methionine = [protein]-L-isoaspartate alpha-methyl ester + S-adenosyl-L-homocysteine. Functionally, catalyzes the methyl esterification of L-isoaspartyl residues in peptides and proteins that result from spontaneous decomposition of normal L-aspartyl and L-asparaginyl residues. It plays a role in the repair and/or degradation of damaged proteins. In Pseudomonas syringae pv. tomato (strain ATCC BAA-871 / DC3000), this protein is Protein-L-isoaspartate O-methyltransferase.